A 150-amino-acid polypeptide reads, in one-letter code: General odorant-binding protein 19d (150 aa).

An N-terminal signal peptide occupies residues 1-23 (MSHLVHLTVLLLVGILCLGATSA). Cystine bridges form between Cys41–Cys72, Cys68–Cys126, and Cys116–Cys135.

It belongs to the PBP/GOBP family. Expressed in the antenna, mostly on the anterior surface of the third antennal segment. Also detected in the maxillary palps and in cells at the bases of the taste hairs on the proboscis and internal taste organs of the head.

The protein resides in the secreted. The polypeptide is General odorant-binding protein 19d (Obp19d) (Drosophila melanogaster (Fruit fly)).